A 326-amino-acid chain; its full sequence is tRNA dimethylallyltransferase 2 (326 aa).

14–21 (GPTASGKT) is a binding site for ATP. 16–21 (TASGKT) contacts substrate. The interaction with substrate tRNA stretch occupies residues 39-42 (DSMQ).

This sequence belongs to the IPP transferase family. As to quaternary structure, monomer. Requires Mg(2+) as cofactor.

The enzyme catalyses adenosine(37) in tRNA + dimethylallyl diphosphate = N(6)-dimethylallyladenosine(37) in tRNA + diphosphate. Its function is as follows. Catalyzes the transfer of a dimethylallyl group onto the adenine at position 37 in tRNAs that read codons beginning with uridine, leading to the formation of N6-(dimethylallyl)adenosine (i(6)A). This is tRNA dimethylallyltransferase 2 from Geotalea daltonii (strain DSM 22248 / JCM 15807 / FRC-32) (Geobacter daltonii).